The following is a 421-amino-acid chain: Polymerase delta-interacting protein 3 (421 aa).

N-acetylalanine is present on alanine 2. Residue serine 5 is modified to Phosphoserine. Arginine 33 is modified (omega-N-methylarginine). Phosphoserine is present on residues serine 44 and serine 127. At threonine 140 the chain carries Phosphothreonine. Residue lysine 200 forms a Glycyl lysine isopeptide (Lys-Gly) (interchain with G-Cter in SUMO2) linkage. Serine 204, serine 215, and serine 217 each carry phosphoserine. Residue lysine 223 forms a Glycyl lysine isopeptide (Lys-Gly) (interchain with G-Cter in SUMO2) linkage. The residue at position 244 (serine 244) is a Phosphoserine. Lysine 248 participates in a covalent cross-link: Glycyl lysine isopeptide (Lys-Gly) (interchain with G-Cter in SUMO2). Serine 275 carries the phosphoserine modification. Residues 280–351 (TKMTVNNLHP…QPMKCNLHMN (72 aa)) enclose the RRM domain. Residues 370–379 (SMKKESELPR) show a composition bias toward basic and acidic residues. The disordered stretch occupies residues 370–393 (SMKKESELPRRVNSASSSNPPAEV). A Glycyl lysine isopeptide (Lys-Gly) (interchain with G-Cter in SUMO2) cross-link involves residue lysine 372. 2 positions are modified to phosphoserine; by RPS6KB1: serine 383 and serine 385. Lysine 418 participates in a covalent cross-link: Glycyl lysine isopeptide (Lys-Gly) (interchain with G-Cter in SUMO2).

Interacts with POLD2. Interacts with NCBP1 and EIF4A3. Associates with the multiprotein exon junction complex (EJC). Interacts with RPS6KB1 (activated). Interacts with ERH. Interacts with THOC2, DDX39B and ZC3H11A; the interactions are ATP-dependent and indicative for an association with the TREX complex. In terms of processing, phosphorylated at Ser-383 and Ser-385 by RPS6KB1.

Its subcellular location is the nucleus. The protein localises to the nucleus speckle. It is found in the cytoplasm. Its function is as follows. Is involved in regulation of translation. Is preferentially associated with CBC-bound spliced mRNA-protein complexes during the pioneer round of mRNA translation. Contributes to enhanced translational efficiency of spliced over nonspliced mRNAs. Recruits activated ribosomal protein S6 kinase beta-1 I/RPS6KB1 to newly synthesized mRNA. Involved in nuclear mRNA export; probably mediated by association with the TREX complex. In Homo sapiens (Human), this protein is Polymerase delta-interacting protein 3 (POLDIP3).